The following is a 162-amino-acid chain: Ribosome maturation factor RimP (162 aa).

Belongs to the RimP family.

Its subcellular location is the cytoplasm. In terms of biological role, required for maturation of 30S ribosomal subunits. This Ralstonia nicotianae (strain ATCC BAA-1114 / GMI1000) (Ralstonia solanacearum) protein is Ribosome maturation factor RimP.